A 614-amino-acid chain; its full sequence is Aspartate--tRNA ligase (614 aa).

Glutamate 174 provides a ligand contact to L-aspartate. Residues 198-201 (QLFK) form an aspartate region. Arginine 220 provides a ligand contact to L-aspartate. ATP contacts are provided by residues 220–222 (RDE) and glutamine 229. Histidine 448 serves as a coordination point for L-aspartate. An ATP-binding site is contributed by glutamate 482. An L-aspartate-binding site is contributed by arginine 489. ATP is bound at residue 534 to 537 (GLDR).

The protein belongs to the class-II aminoacyl-tRNA synthetase family. Type 1 subfamily. As to quaternary structure, homodimer.

It localises to the cytoplasm. It carries out the reaction tRNA(Asp) + L-aspartate + ATP = L-aspartyl-tRNA(Asp) + AMP + diphosphate. Catalyzes the attachment of L-aspartate to tRNA(Asp) in a two-step reaction: L-aspartate is first activated by ATP to form Asp-AMP and then transferred to the acceptor end of tRNA(Asp). The sequence is that of Aspartate--tRNA ligase from Lactobacillus acidophilus (strain ATCC 700396 / NCK56 / N2 / NCFM).